Here is a 684-residue protein sequence, read N- to C-terminus: Transcriptional regulatory protein RCO1 (684 aa).

Met-1 carries the N-acetylmethionine modification. The tract at residues Met-1 to Leu-48 is disordered. Residues Arg-10 to Ser-29 are compositionally biased toward low complexity. Ser-68 is subject to Phosphoserine. The segment at Glu-260–Lys-309 adopts a PHD-type 1 zinc-finger fold. The PHD-type 2; atypical zinc finger occupies Phe-414–Thr-472. Position 683 is a phosphoserine (Ser-683).

Component of the RPD3C(S) complex composed of at least EAF3, RCO1, RPD3, SIN3, and UME1.

The protein localises to the nucleus. Functionally, catalytic component of the RPD3C(S) histone deacetylase complex responsible for the deacetylation of lysine residues on the N-terminal part of the core histones (H2A, H2B, H3 and H4). Histone deacetylation gives a tag for epigenetic repression and plays an important role in transcriptional regulation, cell cycle progression, DNA damage response, osmotic stress response and developmental events. The protein is Transcriptional regulatory protein RCO1 (RCO1) of Saccharomyces cerevisiae (strain ATCC 204508 / S288c) (Baker's yeast).